A 407-amino-acid chain; its full sequence is 5-aminolevulinate synthase 1 (407 aa).

The substrate site is built by Arg21, Ser137, and Lys156. Ser189, His217, and Thr245 together coordinate pyridoxal 5'-phosphate. Residue Lys248 is part of the active site. Lys248 bears the N6-(pyridoxal phosphate)lysine mark. Pyridoxal 5'-phosphate-binding residues include Ser277 and Thr278. A substrate-binding site is contributed by Thr363.

Belongs to the class-II pyridoxal-phosphate-dependent aminotransferase family. In terms of assembly, homodimer. The cofactor is pyridoxal 5'-phosphate.

It catalyses the reaction succinyl-CoA + glycine + H(+) = 5-aminolevulinate + CO2 + CoA. It functions in the pathway porphyrin-containing compound metabolism; protoporphyrin-IX biosynthesis; 5-aminolevulinate from glycine: step 1/1. The chain is 5-aminolevulinate synthase 1 (hemA) from Cereibacter sphaeroides (strain ATCC 17023 / DSM 158 / JCM 6121 / CCUG 31486 / LMG 2827 / NBRC 12203 / NCIMB 8253 / ATH 2.4.1.) (Rhodobacter sphaeroides).